A 342-amino-acid polypeptide reads, in one-letter code: SWR1-complex protein 5 (342 aa).

3 disordered regions span residues 1 to 126 (MAPT…PVTI), 142 to 178 (PRTSTAKPDESADPANCDIAKSSSQQPETAKAKDPDS), and 214 to 238 (LGENAPADGETAAEDESSSAKRMPR). Acidic residues-rich tracts occupy residues 8–20 (LAEDYASEEDSDF) and 33–43 (ISDDDDEEAGE). The span at 78-87 (GEKRQKKTKT) shows a compositional bias: basic residues. Residues 260–341 (NLSMASRLQA…RRARMAQAGK (82 aa)) enclose the BCNT-C domain.

It belongs to the SWC5 family. As to quaternary structure, component of the SWR1 chromatin remodeling complex.

It localises to the nucleus. Component of the SWR1 complex which mediates the ATP-dependent exchange of histone H2A for the H2A variant H2A.Z leading to transcriptional regulation of selected genes by chromatin remodeling. Involved in chromosome stability. This chain is SWR1-complex protein 5 (crc-2), found in Neurospora crassa (strain ATCC 24698 / 74-OR23-1A / CBS 708.71 / DSM 1257 / FGSC 987).